The following is a 284-amino-acid chain: RNase adapter protein RapZ (284 aa).

8–15 (GRSGSGKS) is an ATP binding site. GTP is bound at residue 56–59 (DVRN). Positions 266 to 284 (RSRGKNVQSRHRTLEKRKS) are RNA-binding.

The protein belongs to the RapZ-like family. RapZ subfamily. Homotrimer.

In terms of biological role, modulates the synthesis of GlmS, by affecting the processing and stability of the regulatory small RNA GlmZ. When glucosamine-6-phosphate (GlcN6P) concentrations are high in the cell, RapZ binds GlmZ and targets it to cleavage by RNase E. Consequently, GlmZ is inactivated and unable to activate GlmS synthesis. Under low GlcN6P concentrations, RapZ is sequestered and inactivated by an other regulatory small RNA, GlmY, preventing GlmZ degradation and leading to synthesis of GlmS. The sequence is that of RNase adapter protein RapZ from Klebsiella pneumoniae (strain 342).